Here is a 348-residue protein sequence, read N- to C-terminus: Terpene cyclase ctvD (348 aa).

The chain crosses the membrane as a helical span at residues 2-22 (ALSAYFLLCLSVLGLDAIYGF). Residue N51 is glycosylated (N-linked (GlcNAc...) asparagine). The next 7 helical transmembrane spans lie at 77 to 97 (PGLS…WVAI), 116 to 136 (LFAM…WCAI), 161 to 181 (LIPI…LLPE), 191 to 211 (QIAI…HWGL), 235 to 255 (FAFV…LTLI), 283 to 303 (GLWF…LWAM), and 323 to 343 (LKVG…WLLW).

This sequence belongs to the membrane-bound ascI terpene cyclase family.

The protein localises to the membrane. Its pathway is mycotoxin biosynthesis. Functionally, hydrolase; part of the gene cluster that mediates the biosynthesis of citreoviridin, an inhibitor of the of F1-ATPase beta-subunit. The HR-PKS ctvA accepts acetyl-CoA as the starter unit and catalyzes eight iterations of malonyl-CoA extension and four iterations of SAM-dependent methylation at C4, C12, C14, and C16. The KR and DH domains selectively act on the first six iterations to generate the hexaene chain. In the last three iterations, the KR and DH domains terminate their functions to yield a beta,delta-diketo ester moiety, which then undergoes intramolecular cyclization to yield an alpha-pyrone intermediate. Subsequently, ctvB methylates the alpha-pyrone hydroxyl group to generate citreomontanin. In order to form the tetrahydrofuran ring with the correct stereochemistry, the terminal alkenes of citreomontanin need to undergo isomerization to yield a (17Z)-hexaene, a step that could be catalyzed by ctvC. The (17Z)-hexaene then undergoes bisepoxidation by ctvC to form a (17R,16R,15S,14R)-bisepoxide moiety. Lastly, ctvD acts as a regioselective hydrolase to form the tetrahydrofuran ring with the substituents in the correct absolute configuration, completing the biosynthesis of citreoviridin. This chain is Terpene cyclase ctvD, found in Aspergillus terreus (strain NIH 2624 / FGSC A1156).